The chain runs to 138 residues: Aspartate 1-decarboxylase (138 aa).

Catalysis depends on S25, which acts as the Schiff-base intermediate with substrate; via pyruvic acid. Residue S25 is modified to Pyruvic acid (Ser). T57 is a substrate binding site. Y58 acts as the Proton donor in catalysis. 73–75 contacts substrate; it reads GAA. A disordered region spans residues 117–138; that stretch reads VDADPTAPPAPGLERSPLAEPV.

The protein belongs to the PanD family. In terms of assembly, heterooctamer of four alpha and four beta subunits. Pyruvate is required as a cofactor. Is synthesized initially as an inactive proenzyme, which is activated by self-cleavage at a specific serine bond to produce a beta-subunit with a hydroxyl group at its C-terminus and an alpha-subunit with a pyruvoyl group at its N-terminus.

It localises to the cytoplasm. It catalyses the reaction L-aspartate + H(+) = beta-alanine + CO2. The protein operates within cofactor biosynthesis; (R)-pantothenate biosynthesis; beta-alanine from L-aspartate: step 1/1. Catalyzes the pyruvoyl-dependent decarboxylation of aspartate to produce beta-alanine. The protein is Aspartate 1-decarboxylase of Clavibacter michiganensis subsp. michiganensis (strain NCPPB 382).